Consider the following 501-residue polypeptide: Endonuclease domain-containing 1 protein (501 aa).

The first 21 residues, 1–21, serve as a signal peptide directing secretion; the sequence is MGCARWLALGGLLALAGLLQA. Residue lysine 408 is modified to N6-acetyllysine.

This sequence belongs to the DNA/RNA non-specific endonuclease family. As to quaternary structure, interacts with RNF26; this interaction is important to modulate innate immune signaling through the cGAS-STING pathway.

It is found in the secreted. Its function is as follows. May act as a DNase and a RNase. Plays a role in the modulation of innate immune signaling through the cGAS-STING pathway by interacting with RNF26. The polypeptide is Endonuclease domain-containing 1 protein (Endod1) (Mus musculus (Mouse)).